The primary structure comprises 159 residues: Oleosin Cor a 12 (159 aa).

The span at 1 to 10 shows a compositional bias: polar residues; the sequence is MADRPQQLQV. The segment at 1-24 is disordered; sequence MADRPQQLQVHPQRGHGHYEGGIK. 3 helical membrane passes run 45-65, 70-90, and 92-112; these read VGGTLLALAGLTLAGSVIGLL, LFIIFSPVLVPAAIVVGLAVA, and FLSSGALGLTGLSSLSWVLNY.

This sequence belongs to the oleosin family. Expressed in seeds.

The protein localises to the lipid droplet. It is found in the membrane. May have a structural role to stabilize the lipid body during desiccation of the seed by preventing coalescence of the oil. Probably interacts with both lipid and phospholipid moieties of lipid bodies. May also provide recognition signals for specific lipase anchorage in lipolysis during seedling growth. This Corylus avellana (European hazel) protein is Oleosin Cor a 12.